The following is a 144-amino-acid chain: MRFNELQPAKGSRFAGKRLGRGIGSGLGKTSGKGHKGQKARSGGYHKVGFEGGQMPLQRRLPKRGFRSLKKLGTARIRLSELQKIDAEVIDLNALKAAGLASERAVAAKVYLNGTISKAVTLRGVSISAGAKAALEAAGGSVEE.

Residues 1 to 57 are disordered; the sequence is MRFNELQPAKGSRFAGKRLGRGIGSGLGKTSGKGHKGQKARSGGYHKVGFEGGQMPL. Residues 21 to 31 show a composition bias toward gly residues; sequence RGIGSGLGKTS.

It belongs to the universal ribosomal protein uL15 family. Part of the 50S ribosomal subunit.

Functionally, binds to the 23S rRNA. The sequence is that of Large ribosomal subunit protein uL15 from Dichelobacter nodosus (strain VCS1703A).